Here is a 185-residue protein sequence, read N- to C-terminus: Pro-adrenomedullin (185 aa).

Residues Met-1–Thr-21 form the signal peptide. Arg-41 is modified (arginine amide). The propeptide occupies Glu-45–Val-91. The segment at Gly-68–Ile-89 is disordered. Residues Gln-73–Ala-87 are compositionally biased toward low complexity. Cys-107 and Cys-112 are joined by a disulfide. The segment at Thr-125–Leu-185 is disordered. Position 143 is a tyrosine amide (Tyr-143). Positions Ser-150–Leu-185 are cleaved as a propeptide — preproAM C-terminal fragment. Positions Val-160 to Ala-170 are enriched in polar residues.

This sequence belongs to the adrenomedullin family. As to expression, expressed in adrenal glands, lung, kidney, heart, spleen, duodenum and submandibular glands.

The protein resides in the secreted. Adrenomedullin/ADM and proadrenomedullin N-20 terminal peptide/PAMP are peptide hormones that act as potent hypotensive and vasodilatator agents. Numerous actions have been reported most related to the physiologic control of fluid and electrolyte homeostasis. Functionally, ADM function is mediated by the CALCRL-RAMP2 and CALCRL-RAMP3 receptor complexes with ADM showing the highest potency for the CALCRL-RAMP2 complex. The chain is Pro-adrenomedullin from Rattus norvegicus (Rat).